The following is a 245-amino-acid chain: Alpha carbonic anhydrase 2 (245 aa).

A signal peptide spans 1–23 (MDKISIRCFIFLVLTSFVTTVSC). Positions 37–245 (HEFSYEWNQE…THRYFLLFFT (209 aa)) constitute an Alpha-carbonic anhydrase domain. A disulfide bridge links C62 with C222. An N-linked (GlcNAc...) asparagine glycan is attached at N95. Residue H103 is the Proton acceptor of the active site. Residue N120 is glycosylated (N-linked (GlcNAc...) asparagine). 3 residues coordinate Zn(2+): H130, H132, and H149. Residue N156 is glycosylated (N-linked (GlcNAc...) asparagine). 218 to 219 (TT) contributes to the substrate binding site.

It belongs to the alpha-class carbonic anhydrase family. The cofactor is Zn(2+). Post-translationally, N-glycosylated. Expressed in stems and roots.

It is found in the plastid. The protein localises to the chloroplast stroma. The enzyme catalyses hydrogencarbonate + H(+) = CO2 + H2O. Functionally, reversible hydration of carbon dioxide. The polypeptide is Alpha carbonic anhydrase 2 (ACA2) (Arabidopsis thaliana (Mouse-ear cress)).